A 46-amino-acid chain; its full sequence is uncharacterized protein (46 aa).

This is an uncharacterized protein from Saccharomyces cerevisiae (strain ATCC 204508 / S288c) (Baker's yeast).